Consider the following 155-residue polypeptide: Small ribosomal subunit protein uS7 (155 aa).

This sequence belongs to the universal ribosomal protein uS7 family. As to quaternary structure, part of the 30S ribosomal subunit. Contacts proteins S9 and S11.

Its function is as follows. One of the primary rRNA binding proteins, it binds directly to 16S rRNA where it nucleates assembly of the head domain of the 30S subunit. Is located at the subunit interface close to the decoding center, probably blocks exit of the E-site tRNA. The polypeptide is Small ribosomal subunit protein uS7 (Prosthecochloris aestuarii (strain DSM 271 / SK 413)).